The following is a 368-amino-acid chain: Isopentenyl-diphosphate delta-isomerase (368 aa).

Residue 7–8 participates in substrate binding; that stretch reads RK. Residues Thr-65, 66 to 68, Ser-96, and Asn-125 each bind FMN; that span reads GMT. 96–98 is a substrate binding site; that stretch reads SQR. Gln-160 contacts substrate. Glu-161 is a Mg(2+) binding site. FMN-binding positions include Lys-193, Ser-218, Thr-223, 275 to 277, and 296 to 297; these read GIR and AL.

The protein belongs to the IPP isomerase type 2 family. In terms of assembly, homooctamer. Dimer of tetramers. It depends on FMN as a cofactor. The cofactor is NADPH. Mg(2+) is required as a cofactor.

It localises to the cytoplasm. The catalysed reaction is isopentenyl diphosphate = dimethylallyl diphosphate. Functionally, involved in the biosynthesis of isoprenoids. Catalyzes the 1,3-allylic rearrangement of the homoallylic substrate isopentenyl (IPP) to its allylic isomer, dimethylallyl diphosphate (DMAPP). This chain is Isopentenyl-diphosphate delta-isomerase, found in Saccharolobus islandicus (strain L.S.2.15 / Lassen #1) (Sulfolobus islandicus).